Reading from the N-terminus, the 255-residue chain is Probable pyridoxal 5'-phosphate synthase subunit PDX2 (255 aa).

46-48 (GES) is a binding site for L-glutamine. C78 serves as the catalytic Nucleophile. L-glutamine contacts are provided by residues R108 and 142 to 143 (IR). Catalysis depends on charge relay system residues H202 and E204. The interval 225-255 (GASSSSSKTIVSVGETSAGPEPAKPDLPIFQ) is disordered.

Belongs to the glutaminase PdxT/SNO family. In terms of assembly, interacts with PDX1.1 or PDX1.3, but not with PDX1.2. Binds to RPA2A. In terms of tissue distribution, strongly expressed in roots, stems, leaves and flowers.

Its subcellular location is the cytoplasm. The enzyme catalyses aldehydo-D-ribose 5-phosphate + D-glyceraldehyde 3-phosphate + L-glutamine = pyridoxal 5'-phosphate + L-glutamate + phosphate + 3 H2O + H(+). The catalysed reaction is L-glutamine + H2O = L-glutamate + NH4(+). The protein operates within cofactor biosynthesis; pyridoxal 5'-phosphate biosynthesis. Catalyzes the hydrolysis of glutamine to glutamate and ammonia as part of the biosynthesis of pyridoxal 5'-phosphate. The resulting ammonia molecule is channeled to the active site of PDX1. Involved in the indirect resistance to singlet oxygen-generating photosensitizers. The protein is Probable pyridoxal 5'-phosphate synthase subunit PDX2 (PDX2) of Arabidopsis thaliana (Mouse-ear cress).